Reading from the N-terminus, the 377-residue chain is MDIPPLAGKIAALSLSALPVSYALNHVSALSHPLWVALMSALILGLLFVAVYSLSHGEVSYDPLYAVFAVFAFTSVVDLIIALQEDSYVVGFMEFYTKEGEPYLRTAHGVFICYWDGTVHYLLYLAMAGAICRRKRYRNFGLYWLGSFAMSILVFLTGNILGKYSSEIRPAFFLTIPYLLVPCWAGMKVFSQPRALTRCTANMVQEEQRKGLLQRPADLALVIYLILAGFFTLFRGLVVLDCPTDACFVYIYQYEPYLRDPVAYPKVQMLMYMFYVLPFCGLAAYALTFPGCSWLPDWALVFAGGIGQAQFSHMGASMHLRTPFTYRVPEDTWGCFFVCNLLYALGPHLLAYRCLQWPAFFHQPPPSDPLALHKKQH.

9 helical membrane passes run Ile-10–Leu-30, Leu-34–Leu-54, Pro-63–Leu-83, Phe-111–Ile-131, Phe-140–Ile-160, Pro-170–Phe-190, Leu-219–Val-239, Met-269–Phe-289, and Thr-332–Tyr-352. 2 EXPERA domains span residues Tyr-61–Gly-186 and Ala-217–Ala-351.

This sequence belongs to the TM6SF family. In terms of tissue distribution, substantial expression in liver and intestine, whereas all other tissues analyzed show low levels.

It is found in the endoplasmic reticulum membrane. Its subcellular location is the endoplasmic reticulum-Golgi intermediate compartment membrane. In terms of biological role, regulator of liver fat metabolism influencing triglyceride secretion and hepatic lipid droplet content. May function as sterol isomerase. This chain is Transmembrane 6 superfamily member 2 (TM6SF2), found in Homo sapiens (Human).